The primary structure comprises 369 residues: MHGESPIKRRVSRKIWVGSVPVGGDAPIAVQSMTNSDTNDVAATVAQINRLEAAGVDIVRVSVPDMDAAEAFGRIKQLVKVPLVADIHFDYKIALRVAELGVDCLRINPGNIGREDRVRAVVDAARDRGIPIRIGVNAGSLEKDLQKKYGEPTPAALVESALRHVEHLERLNFQDFKVSVKASDVFMAVEAYRLLAKEIVQPLHLGITEAGGLRSGTVKSAVGLGMLLAEGIGDTIRISLAADPVEEVKVGYDILKSLHLRSRGINFIACPSCSRQNFDVVKTMNELEVRLEDLLVPLDVAVIGCVVNGPGEAKEAHVGLTGGTPNLIYIDGKPSQKLTNDNLVDELERLIREKAAQKVAADAALIARG.

[4Fe-4S] cluster-binding residues include C270, C273, C305, and E312.

The protein belongs to the IspG family. The cofactor is [4Fe-4S] cluster.

It catalyses the reaction (2E)-4-hydroxy-3-methylbut-2-enyl diphosphate + oxidized [flavodoxin] + H2O + 2 H(+) = 2-C-methyl-D-erythritol 2,4-cyclic diphosphate + reduced [flavodoxin]. Its pathway is isoprenoid biosynthesis; isopentenyl diphosphate biosynthesis via DXP pathway; isopentenyl diphosphate from 1-deoxy-D-xylulose 5-phosphate: step 5/6. In terms of biological role, converts 2C-methyl-D-erythritol 2,4-cyclodiphosphate (ME-2,4cPP) into 1-hydroxy-2-methyl-2-(E)-butenyl 4-diphosphate. This Pseudomonas fluorescens (strain SBW25) protein is 4-hydroxy-3-methylbut-2-en-1-yl diphosphate synthase (flavodoxin).